The chain runs to 116 residues: Large ribosomal subunit protein uL24 (116 aa).

This sequence belongs to the universal ribosomal protein uL24 family. As to quaternary structure, part of the 50S ribosomal subunit.

One of two assembly initiator proteins, it binds directly to the 5'-end of the 23S rRNA, where it nucleates assembly of the 50S subunit. Its function is as follows. Located at the polypeptide exit tunnel on the outside of the subunit. This is Large ribosomal subunit protein uL24 from Methanosarcina barkeri (strain Fusaro / DSM 804).